The following is a 72-amino-acid chain: Translation initiation factor IF-1 (72 aa).

Positions 1-72 (MSKEEVLEFS…TKGRIIYRYK (72 aa)) constitute an S1-like domain.

The protein belongs to the IF-1 family. In terms of assembly, component of the 30S ribosomal translation pre-initiation complex which assembles on the 30S ribosome in the order IF-2 and IF-3, IF-1 and N-formylmethionyl-tRNA(fMet); mRNA recruitment can occur at any time during PIC assembly.

The protein localises to the cytoplasm. Its function is as follows. One of the essential components for the initiation of protein synthesis. Stabilizes the binding of IF-2 and IF-3 on the 30S subunit to which N-formylmethionyl-tRNA(fMet) subsequently binds. Helps modulate mRNA selection, yielding the 30S pre-initiation complex (PIC). Upon addition of the 50S ribosomal subunit IF-1, IF-2 and IF-3 are released leaving the mature 70S translation initiation complex. In Bartonella henselae (strain ATCC 49882 / DSM 28221 / CCUG 30454 / Houston 1) (Rochalimaea henselae), this protein is Translation initiation factor IF-1.